The following is a 326-amino-acid chain: Delta-aminolevulinic acid dehydratase (326 aa).

Zn(2+)-binding residues include Cys-119, Cys-121, and Cys-129. Lys-198 serves as the catalytic Schiff-base intermediate with substrate. 5-aminolevulinate is bound by residues Arg-208 and Arg-220. Glu-236 is a Mg(2+) binding site. Lys-251 (schiff-base intermediate with substrate) is an active-site residue. Residues Ser-277 and Tyr-316 each contribute to the 5-aminolevulinate site.

Belongs to the ALAD family. As to quaternary structure, homooctamer. Zn(2+) serves as cofactor.

It carries out the reaction 2 5-aminolevulinate = porphobilinogen + 2 H2O + H(+). Its pathway is porphyrin-containing compound metabolism; protoporphyrin-IX biosynthesis; coproporphyrinogen-III from 5-aminolevulinate: step 1/4. In terms of biological role, catalyzes an early step in the biosynthesis of tetrapyrroles. Binds two molecules of 5-aminolevulinate per subunit, each at a distinct site, and catalyzes their condensation to form porphobilinogen. The chain is Delta-aminolevulinic acid dehydratase (hemB) from Synechococcus elongatus (strain ATCC 33912 / PCC 7942 / FACHB-805) (Anacystis nidulans R2).